The primary structure comprises 290 residues: MIRNQVEMFAYAKINLALAITGRRPDGYHELESVMQSIGIYDRIRVTLAEGGIQCSCGEWSGPENLAYRAAEAFLSGLGSSQGIHIDIEKNIPVQAGLGGGSADAAAALQALNKLFKEPYTEEELKSFAAQLGADVAFCLKGGTQWATGVGEELKGLPHAPKINLVLIKPDQGVNTAEAYRAFDQEGKFSHLDYAGWQEALASGRAESLIPLLYNDLEPASMKLLPEIAWVKEELMKQNGCLGALMSGSGSAVFGIVQTEEQAEKIAAIWRERNYHVWVTHTMERGNIYG.

Lys-13 is an active-site residue. 93-103 contributes to the ATP binding site; sequence PVQAGLGGGSA. Asp-135 is an active-site residue.

This sequence belongs to the GHMP kinase family. IspE subfamily.

It catalyses the reaction 4-CDP-2-C-methyl-D-erythritol + ATP = 4-CDP-2-C-methyl-D-erythritol 2-phosphate + ADP + H(+). Its pathway is isoprenoid biosynthesis; isopentenyl diphosphate biosynthesis via DXP pathway; isopentenyl diphosphate from 1-deoxy-D-xylulose 5-phosphate: step 3/6. Catalyzes the phosphorylation of the position 2 hydroxy group of 4-diphosphocytidyl-2C-methyl-D-erythritol. This Desulfitobacterium hafniense (strain Y51) protein is 4-diphosphocytidyl-2-C-methyl-D-erythritol kinase.